Reading from the N-terminus, the 364-residue chain is 4-hydroxythreonine-4-phosphate dehydrogenase (364 aa).

Substrate is bound by residues histidine 138 and threonine 139. Residues histidine 169, histidine 214, and histidine 269 each coordinate a divalent metal cation. The substrate site is built by lysine 277, asparagine 286, and arginine 295.

This sequence belongs to the PdxA family. In terms of assembly, homodimer. Requires a divalent metal cation as cofactor.

The protein resides in the cytoplasm. It carries out the reaction 4-(phosphooxy)-L-threonine + NAD(+) = 3-amino-2-oxopropyl phosphate + CO2 + NADH. It functions in the pathway cofactor biosynthesis; pyridoxine 5'-phosphate biosynthesis; pyridoxine 5'-phosphate from D-erythrose 4-phosphate: step 4/5. In terms of biological role, catalyzes the NAD(P)-dependent oxidation of 4-(phosphooxy)-L-threonine (HTP) into 2-amino-3-oxo-4-(phosphooxy)butyric acid which spontaneously decarboxylates to form 3-amino-2-oxopropyl phosphate (AHAP). This is 4-hydroxythreonine-4-phosphate dehydrogenase from Bacteroides thetaiotaomicron (strain ATCC 29148 / DSM 2079 / JCM 5827 / CCUG 10774 / NCTC 10582 / VPI-5482 / E50).